Reading from the N-terminus, the 199-residue chain is Probable GTP-binding protein EngB (199 aa).

One can recognise an EngB-type G domain in the interval 28 to 199 (DLPEIALAGR…DSWDAILEQV (172 aa)). GTP-binding positions include 36–43 (GRSNVGKS), 63–67 (GKTQL), 81–84 (DVPG), 148–151 (TKAD), and 180–182 (FSS). Residues Ser43 and Thr65 each coordinate Mg(2+).

Belongs to the TRAFAC class TrmE-Era-EngA-EngB-Septin-like GTPase superfamily. EngB GTPase family. The cofactor is Mg(2+).

Its function is as follows. Necessary for normal cell division and for the maintenance of normal septation. The polypeptide is Probable GTP-binding protein EngB (Streptococcus pyogenes serotype M28 (strain MGAS6180)).